A 225-amino-acid polypeptide reads, in one-letter code: MKHLFKLDPAKNLPMNDLTKLVHSGTNGFIIGGTDNVQIEAVQKLYELLGETDLPIFLEISNESMILPEADHFLIPVVLNTENSKWTHGLHQELIKEMGAFIPWKRVTAEGYVILNKDAKVAHLTEAKTDLTDEDIVAYARLAENIFHLPIFYVEYSGMYGDPEVVRKASAALSNTKFWYGGGIRSKEQAAEMAKYADTIIVGNIIYEDLEKALETATIFRKKTV.

K6 contributes to the sn-glycerol 1-phosphate binding site. Residues D8 and T34 each coordinate Mg(2+). Residues 153–158 (YVEYSG), G183, and 203–204 (GN) each bind sn-glycerol 1-phosphate.

The protein belongs to the GGGP/HepGP synthase family. Group I subfamily. As to quaternary structure, homodimer. Requires Mg(2+) as cofactor.

The catalysed reaction is sn-glycerol 1-phosphate + all-trans-heptaprenyl diphosphate = 3-heptaprenyl-sn-glycero-1-phosphate + diphosphate. The protein operates within membrane lipid metabolism; glycerophospholipid metabolism. Its function is as follows. Prenyltransferase that catalyzes in vivo the transfer of the heptaprenyl moiety of heptaprenyl pyrophosphate (HepPP; 35 carbon atoms) to the C3 hydroxyl of sn-glycerol-1-phosphate (G1P), producing heptaprenylglyceryl phosphate (HepGP). This reaction is an ether-bond-formation step in the biosynthesis of archaea-type G1P-based membrane lipids found in Bacillales. The chain is Heptaprenylglyceryl phosphate synthase from Listeria monocytogenes serotype 4b (strain F2365).